The sequence spans 172 residues: Adenylate kinase isoenzyme 6 (172 aa).

The ATP site is built by Gly-13, Gly-15, Lys-16, Thr-17, and Thr-18. An NMPbind region spans residues 33–56 (NVGDLAREGQLYDGYDEEYGCPIL). The segment at 108-118 (TRGYNEKKLQD) is LID. Residue Arg-109 coordinates ATP.

Belongs to the adenylate kinase family. AK6 subfamily. In terms of assembly, monomer and homodimer. Interacts with small ribosomal subunit protein uS11. Not a structural component of 43S pre-ribosomes, but transiently interacts with them by binding to uS11. Interacts with COIL (via C-terminus).

It localises to the cytoplasm. The protein localises to the nucleus. The protein resides in the nucleoplasm. Its subcellular location is the cajal body. It catalyses the reaction AMP + ATP = 2 ADP. The enzyme catalyses ATP + H2O = ADP + phosphate + H(+). Functionally, broad-specificity nucleoside monophosphate (NMP) kinase that catalyzes the reversible transfer of the terminal phosphate group between nucleoside triphosphates and monophosphates. Also has ATPase activity. Involved in the late cytoplasmic maturation steps of the 40S ribosomal particles, specifically 18S rRNA maturation. While NMP activity is not required for ribosome maturation, ATPase activity is. Associates transiently with small ribosomal subunit protein uS11. ATP hydrolysis breaks the interaction with uS11. May temporarily remove uS11 from the ribosome to enable a conformational change of the ribosomal RNA that is needed for the final maturation step of the small ribosomal subunit. Its NMP activity may have a role in nuclear energy homeostasis. May be involved in regulation of Cajal body (CB) formation. This is Adenylate kinase isoenzyme 6 from Mus musculus (Mouse).